The sequence spans 741 residues: uncharacterized protein (741 aa).

The signal sequence occupies residues 1 to 22; the sequence is MKSVKIIIILALALLIQISHIA.

This is an uncharacterized protein from Archaeoglobus fulgidus (strain ATCC 49558 / DSM 4304 / JCM 9628 / NBRC 100126 / VC-16).